We begin with the raw amino-acid sequence, 468 residues long: Citrate synthase, mitochondrial (468 aa).

The N-terminal 30 residues, Met1–Ser30, are a transit peptide targeting the mitochondrion. Active-site residues include His303 and His349. Residue Arg358 coordinates oxaloacetate. The active site involves Asp404. 2 residues coordinate oxaloacetate: Arg430 and Arg450.

Belongs to the citrate synthase family. Homodimer.

The protein resides in the mitochondrion matrix. It carries out the reaction oxaloacetate + acetyl-CoA + H2O = citrate + CoA + H(+). It functions in the pathway carbohydrate metabolism; tricarboxylic acid cycle; isocitrate from oxaloacetate: step 1/2. Functionally, key enzyme of the Krebs tricarboxylic acid cycle which catalyzes the synthesis of citrate from acetyl coenzyme A and oxaloacetate. This Danio rerio (Zebrafish) protein is Citrate synthase, mitochondrial (cs).